Reading from the N-terminus, the 249-residue chain is Ribosomal RNA small subunit methyltransferase J (249 aa).

S-adenosyl-L-methionine contacts are provided by residues 101–102 (RD), 117–118 (ER), and aspartate 171.

The protein belongs to the methyltransferase superfamily. RsmJ family.

Its subcellular location is the cytoplasm. It catalyses the reaction guanosine(1516) in 16S rRNA + S-adenosyl-L-methionine = N(2)-methylguanosine(1516) in 16S rRNA + S-adenosyl-L-homocysteine + H(+). Functionally, specifically methylates the guanosine in position 1516 of 16S rRNA. This Tolumonas auensis (strain DSM 9187 / NBRC 110442 / TA 4) protein is Ribosomal RNA small subunit methyltransferase J.